An 850-amino-acid chain; its full sequence is Tripartite terminase subunit 1 (850 aa).

The segment at 191 to 219 adopts a C3H1-type zinc-finger fold; it reads CAQCYEELTIIPNQGRSLNKRLQGLLCNH. The interval 438 to 489 is disordered; that stretch reads GTTLMTASNSSNSSTHSQRNNGGGGRARGGGKKVVGGGVNGQDGDGSENGLR. Over residues 439–457 the composition is skewed to low complexity; the sequence is TTLMTASNSSNSSTHSQRN. Gly residues predominate over residues 458–481; sequence NGGGGRARGGGKKVVGGGVNGQDG. 709–716 serves as a coordination point for ATP; that stretch reads YNETFGKQ. A disordered region spans residues 801-831; that stretch reads WLPSPYPSSSTAGVSRRVRATRKRPRRASSL. The segment covering 816–827 has biased composition (basic residues); it reads RRVRATRKRPRR. A Nuclear localization signal motif is present at residues 822–827; sequence RKRPRR.

The protein belongs to the herpesviridae TRM1 protein family. As to quaternary structure, associates with TRM2 and TRM3 to form the tripartite terminase complex. Interacts with portal protein.

It localises to the host nucleus. In terms of biological role, component of the molecular motor that translocates viral genomic DNA in empty capsid during DNA packaging. Forms a tripartite terminase complex together with TRM2 and TRM3 in the host cytoplasm. Once the complex reaches the host nucleus, it interacts with the capsid portal vertex. This portal forms a ring in which genomic DNA is translocated into the capsid. TRM1 carries an endonuclease activity that plays an important role for the cleavage of concatemeric viral DNA into unit length genomes. The polypeptide is Tripartite terminase subunit 1 (Homo sapiens (Human)).